A 128-amino-acid polypeptide reads, in one-letter code: UPF0102 protein Acry_2261 (128 aa).

It belongs to the UPF0102 family.

This chain is UPF0102 protein Acry_2261, found in Acidiphilium cryptum (strain JF-5).